Reading from the N-terminus, the 819-residue chain is Lon protease (819 aa).

Residues 1 to 14 (MNSTNNTDSQNLDP) show a composition bias toward polar residues. The interval 1–40 (MNSTNNTDSQNLDPNASEVEKLLDESAEAEEKVDDHTPPS) is disordered. Residues 18–38 (EVEKLLDESAEAEEKVDDHTP) show a composition bias toward basic and acidic residues. The 198-residue stretch at 42–239 (LFILPLNKRP…KALVLLKKEL (198 aa)) folds into the Lon N-terminal domain. 392 to 399 (GPPGVGKT) provides a ligand contact to ATP. Positions 634–818 (KTPVGVATGL…DDVFKIAFPG (185 aa)) constitute a Lon proteolytic domain. Residues serine 724 and lysine 767 contribute to the active site.

This sequence belongs to the peptidase S16 family. Homohexamer. Organized in a ring with a central cavity.

It is found in the cytoplasm. It carries out the reaction Hydrolysis of proteins in presence of ATP.. ATP-dependent serine protease that mediates the selective degradation of mutant and abnormal proteins as well as certain short-lived regulatory proteins. Required for cellular homeostasis and for survival from DNA damage and developmental changes induced by stress. Degrades polypeptides processively to yield small peptide fragments that are 5 to 10 amino acids long. Binds to DNA in a double-stranded, site-specific manner. This chain is Lon protease, found in Chlamydia trachomatis serovar D (strain ATCC VR-885 / DSM 19411 / UW-3/Cx).